The chain runs to 335 residues: Ubiquinone biosynthesis protein COQ4, mitochondrial (335 aa).

Residues 1–10 (MLRLSLLRST) constitute a mitochondrion transit peptide. Residues H210, D211, H214, and E226 each contribute to the Zn(2+) site.

The protein belongs to the COQ4 family. In terms of assembly, component of a multi-subunit COQ enzyme complex, composed of at least COQ3, COQ4, COQ5, COQ6, COQ7 and COQ9. Interacts with COQ3. The cofactor is Zn(2+).

Its subcellular location is the mitochondrion inner membrane. The enzyme catalyses 4-hydroxy-3-methoxy-5-(all-trans-hexaprenyl)benzoate + H(+) = 2-methoxy-6-(all-trans-hexaprenyl)phenol + CO2. It functions in the pathway cofactor biosynthesis; ubiquinone biosynthesis. Lyase that catalyzes the C1-decarboxylation of 4-hydroxy-3-methoxy-5-(all-trans-hexaprenyl)benzoic acid into 2-methoxy-6-(all-trans-hexaprenyl)phenol during ubiquinone biosynthesis. This chain is Ubiquinone biosynthesis protein COQ4, mitochondrial, found in Saccharomyces cerevisiae (strain YJM789) (Baker's yeast).